A 550-amino-acid polypeptide reads, in one-letter code: Solute carrier family 22 member 6 (550 aa).

The Cytoplasmic segment spans residues 1–9 (MAFNDLLQQ). Residues 10–30 (VGGVGRFQQIQVTLVVLPLLL) traverse the membrane as a helical segment. Topologically, residues 31–135 (MASHNTVQNF…LVCSHRALRQ (105 aa)) are extracellular. N-linked (GlcNAc...) asparagine glycans are attached at residues asparagine 56, asparagine 92, and asparagine 113. Residues 136–156 (LAQSLYMVGVLLGAMVFGYLA) form a helical membrane-spanning segment. Residues 157-164 (DRLGRRKV) are Cytoplasmic-facing. The chain crosses the membrane as a helical span at residues 165-187 (LILNYLQTAVSGTCAAFAPNFPI). The Extracellular portion of the chain corresponds to 188–190 (YCA). The helical transmembrane segment at 191–213 (FRLLSGMSLAGIALNCMTLNVEW) threads the bilayer. Over 214–224 (MPIHTRACVGT) the chain is Cytoplasmic. A helical membrane pass occupies residues 225–245 (LIGYVYSLGQFLLAGVAYAVP). At 246–248 (HWR) the chain is on the extracellular side. A helical membrane pass occupies residues 249–269 (HLQLLISVPFFAFFIYSWFFI). Residues 270–337 (ESARWHSSSG…ELLRCPTLRH (68 aa)) are Cytoplasmic-facing. A helical transmembrane segment spans residues 338-358 (LFLCLSMLWFATSFAYYGLVM). The Extracellular portion of the chain corresponds to 359–368 (DLQGFGVSIY). A helical membrane pass occupies residues 369–389 (LIQVIFGAVDLPAKLVGFLVI). Residues 390-395 (NSLGRR) lie on the Cytoplasmic side of the membrane. The helical transmembrane segment at 396 to 416 (PAQMAALLLAGICILLNGVVP) threads the bilayer. Residues 417–425 (QDQSVIRTS) lie on the Extracellular side of the membrane. A helical membrane pass occupies residues 426–446 (LAVLGKGCLAASFNCIFLYTG). Topologically, residues 447-456 (ELYPTMIRQT) are cytoplasmic. Residues 457-477 (GLGMGSTMARVGSIVSPLVSM) form a helical membrane-spanning segment. At 478 to 484 (TTELYPS) the chain is on the extracellular side. A helical membrane pass occupies residues 485–505 (VPLFIYGAVPVAASAVTVLLP). The Cytoplasmic portion of the chain corresponds to 506–550 (ETLGQPLPDTVQDLESRKGKQTPQQQEHQKYMVPLQASAQEKNGL). The tract at residues 513–550 (PDTVQDLESRKGKQTPQQQEHQKYMVPLQASAQEKNGL) is disordered.

The protein belongs to the major facilitator (TC 2.A.1) superfamily. Organic cation transporter (TC 2.A.1.19) family. Post-translationally, glycosylated. Glycosylation is necessary for proper targeting of the transporter to the plasma membrane. As to expression, expressed in kidney; in the basolateral membrane of the proximal tubule.

Its subcellular location is the basolateral cell membrane. The protein resides in the basal cell membrane. The enzyme catalyses (6R)-L-erythro-5,6,7,8-tetrahydrobiopterin(out) + a dicarboxylate(in) = (6R)-L-erythro-5,6,7,8-tetrahydrobiopterin(in) + a dicarboxylate(out). It carries out the reaction L-erythro-7,8-dihydrobiopterin(out) + a dicarboxylate(in) = L-erythro-7,8-dihydrobiopterin(in) + a dicarboxylate(out). The catalysed reaction is L-sepiapterin(out) + a dicarboxylate(in) = L-sepiapterin(in) + a dicarboxylate(out). It catalyses the reaction prostaglandin F2alpha(out) + a dicarboxylate(in) = prostaglandin F2alpha(in) + a dicarboxylate(out). The enzyme catalyses prostaglandin E2(out) + a dicarboxylate(in) = prostaglandin E2(in) + a dicarboxylate(out). It carries out the reaction 3',5'-cyclic AMP(out) + a dicarboxylate(in) = 3',5'-cyclic AMP(in) + a dicarboxylate(out). The catalysed reaction is 3',5'-cyclic GMP(out) + a dicarboxylate(in) = 3',5'-cyclic GMP(in) + a dicarboxylate(out). It catalyses the reaction urate(out) + a dicarboxylate(in) = urate(in) + a dicarboxylate(out). The enzyme catalyses kynurenate(out) + glutarate(in) = kynurenate(in) + glutarate(out). It carries out the reaction (indol-3-yl)acetate(out) + a dicarboxylate(in) = (indol-3-yl)acetate(in) + a dicarboxylate(out). The catalysed reaction is indoxyl sulfate(out) + a dicarboxylate(in) = indoxyl sulfate(in) + a dicarboxylate(out). It catalyses the reaction N-benzoylglycine(out) + a dicarboxylate(in) = N-benzoylglycine(in) + a dicarboxylate(out). The enzyme catalyses 3-carboxy-4-methyl-5-propyl-2-furanpropanoate(out) + a dicarboxylate(in) = 3-carboxy-4-methyl-5-propyl-2-furanpropanoate(in) + a dicarboxylate(out). In terms of biological role, secondary active transporter that functions as a Na(+)-independent organic anion (OA)/dicarboxylate antiporter where the uptake of one molecule of OA into the cell is coupled with an efflux of one molecule of intracellular dicarboxylate such as 2-oxoglutarate or glutarate. Mediates the uptake of OA across the basolateral side of proximal tubule epithelial cells, thereby contributing to the renal elimination of endogenous OA from the systemic circulation into the urine. Functions as a biopterin transporters involved in the uptake and the secretion of coenzymes tetrahydrobiopterin (BH4), dihydrobiopterin (BH2) and sepiapterin to urine, thereby determining baseline levels of blood biopterins. Transports prostaglandin E2 (PGE2) and prostaglandin F2-alpha (PGF2-alpha) and may contribute to their renal excretion. Also mediates the uptake of cyclic nucleotides such as cAMP and cGMP. Involved in the transport of neuroactive tryptophan metabolites kynurenate (KYNA) and xanthurenate (XA) and may contribute to their secretion from the brain. May transport glutamate. Also involved in the disposition of uremic toxins and potentially toxic xenobiotics by the renal organic anion secretory pathway, helping reduce their undesired toxicological effects on the body. Uremic toxins include the indoxyl sulfate (IS), hippurate/N-benzoylglycine (HA), indole acetate (IA), 3-carboxy-4- methyl-5-propyl-2-furanpropionate (CMPF) and urate. Xenobiotics include the mycotoxin ochratoxin (OTA). May also contribute to the transport of organic compounds in testes across the blood-testis-barrier. In Macaca fascicularis (Crab-eating macaque), this protein is Solute carrier family 22 member 6.